Reading from the N-terminus, the 729-residue chain is ATP-dependent RNA helicase DHX15 homolog (729 aa).

The segment at 1–25 is disordered; sequence MSKRRIEVGETYGSKAKKDPEASSS. Residues 82–246 enclose the Helicase ATP-binding domain; it reads MRLLSLHQCI…FDNAPLMKVP (165 aa). ATP is bound at residue 95–102; the sequence is GETGSGKT. The short motif at 193–196 is the DEAH box element; sequence DEAH. The region spanning 271–451 is the Helicase C-terminal domain; it reads TVIQIHMCEE…TVVLQLKKLG (181 aa).

The protein belongs to the DEAD box helicase family. DEAH subfamily. DDX15/PRP43 sub-subfamily.

The catalysed reaction is ATP + H2O = ADP + phosphate + H(+). Its function is as follows. RNA helicase involved in mRNA processing and antiviral innate immunity. Acts as an activator of the p38 MAPK cascade. This is ATP-dependent RNA helicase DHX15 homolog from Drosophila melanogaster (Fruit fly).